The following is a 55-amino-acid chain: Seripauperin-7 (55 aa).

A signal peptide spans 1–20; it reads MVKLTSIAAGVAAIAAGASA.

The protein belongs to the SRP1/TIP1 family. Seripauperin subfamily.

The protein is Seripauperin-7 (PAU7) of Saccharomyces cerevisiae (strain ATCC 204508 / S288c) (Baker's yeast).